We begin with the raw amino-acid sequence, 559 residues long: Glucosylglycerate phosphorylase (559 aa).

The active-site Nucleophile is aspartate 229.

This sequence belongs to the glycosyl hydrolase 13 family. Glucosylglycerate phosphorylase subfamily.

The catalysed reaction is (2R)-2-O-(alpha-D-glucopyranosyl)-glycerate + phosphate = (R)-glycerate + alpha-D-glucose 1-phosphate. In terms of biological role, catalyzes the reversible phosphorolysis of glucosylglycerate into alpha-D-glucose 1-phosphate (Glc1P) and D-glycerate (also called (R)-glycerate). May be a regulator of intracellular levels of glucosylglycerate, a compatible solute that primarily protects organisms facing salt stress and very specific nutritional constraints. Cannot catalyze the phosphorolysis of sucrose. Does not act on other sugars such as alpha-D-galactose 1-phosphate, alpha-D-mannose 1-phosphate or beta-D-glucose 1-phosphate; in vitro D-erythronate can substitute for D-glycerate with a much lower efficiency. The chain is Glucosylglycerate phosphorylase (ycjM) from Escherichia coli (strain K12).